A 238-amino-acid polypeptide reads, in one-letter code: Histone H1 (238 aa).

Composition is skewed to low complexity over residues 21–34 and 123–132; these read AAVDTPAAKPAKAP and AKAPAAVKPK. Disordered regions lie at residues 21–57 and 123–238; these read AAVDTPAAKPAKAPKAAKAKKSTPGPKKPRVTPAHPS and AKAP…KAKK. Residues 54–124 form the H15 domain; sequence AHPSYAEMVS…KVKGSYKLAK (71 aa). Residues 133–197 are compositionally biased toward basic residues; sequence TATKKKPAAK…AAKPKAKAAA (65 aa). 2 stretches are compositionally biased toward low complexity: residues 198–208 and 217–230; these read KKAPAAATPKK and KRATPVKKAAPAKK.

It belongs to the histone H1/H5 family.

It localises to the nucleus. The protein resides in the chromosome. Histones H1 are necessary for the condensation of nucleosome chains into higher-order structures. This is Histone H1 from Triticum aestivum (Wheat).